The chain runs to 136 residues: EQIAEFKEAFSLFDKDGDGTITTKELGTVMRSLGQNPTEAELQDMINEVDADGNGTIDFPEFLTMMARKMKDTDSEEEIREAFRVFDKDGNGYISAAELRHVMTNLGEKLTDEEVDEMIREADIDGDGQVNYEEFV.

EF-hand domains follow at residues 1–36 (EQIA…LGQN), 37–72 (PTEA…KMKD), 74–109 (DSEE…LGEK), and 110–136 (LTDE…EEFV). Ca(2+) is bound by residues Asp-14, Asp-16, Asp-18, Thr-20, Glu-25, Asp-50, Asp-52, Asn-54, Thr-56, Glu-61, Asp-87, Asp-89, Asn-91, Tyr-93, and Glu-98. The residue at position 109 (Lys-109) is an N6,N6,N6-trimethyllysine. Ca(2+)-binding residues include Asp-123, Asp-125, Asp-127, Gln-129, and Glu-134.

It belongs to the calmodulin family.

Its function is as follows. Calmodulin acts as part of a calcium signal transduction pathway by mediating the control of a large number of enzymes, ion channels, aquaporins and other proteins through calcium-binding. Calcium-binding is required for the activation of calmodulin. Among the enzymes to be stimulated by the calmodulin-calcium complex are a number of protein kinases, such as myosin light-chain kinases and calmodulin-dependent protein kinase type II (CaMK2), and phosphatases. The polypeptide is Calmodulin-A (calm1) (Oryzias latipes (Japanese rice fish)).